The primary structure comprises 156 residues: Small ribosomal subunit protein uS7 (156 aa).

The protein belongs to the universal ribosomal protein uS7 family. Part of the 30S ribosomal subunit. Contacts proteins S9 and S11.

One of the primary rRNA binding proteins, it binds directly to 16S rRNA where it nucleates assembly of the head domain of the 30S subunit. Is located at the subunit interface close to the decoding center, probably blocks exit of the E-site tRNA. This Streptomyces griseus subsp. griseus (strain JCM 4626 / CBS 651.72 / NBRC 13350 / KCC S-0626 / ISP 5235) protein is Small ribosomal subunit protein uS7.